The primary structure comprises 301 residues: MSGSPDLVLETDFPGLKLLNRGKVRDIYDLGDSLLIVATDRISAFDVIMPNPVPDKGRILTRITEFWLRFLSDVTENHLISSDVSRYPEQCRPYERVLAGRSMWVKKARVFPVECIVRGYLAGSGWEDYRKTGQVCGIALPAGLQEAQQLPEPIFTPSTKATLGEHDENISFDAMAAAIGEEMAQGVRDVTIKVYLKASSYARQRGIILADTKFEFGLVEGRLTLVDEVLTPDSSRFWPADRYRVGSSPESFDKQYLRDYLVRSGWKKTDPPPVLPPDVVENTRKRYLEALERLSGHGLEG.

Belongs to the SAICAR synthetase family.

The enzyme catalyses 5-amino-1-(5-phospho-D-ribosyl)imidazole-4-carboxylate + L-aspartate + ATP = (2S)-2-[5-amino-1-(5-phospho-beta-D-ribosyl)imidazole-4-carboxamido]succinate + ADP + phosphate + 2 H(+). It participates in purine metabolism; IMP biosynthesis via de novo pathway; 5-amino-1-(5-phospho-D-ribosyl)imidazole-4-carboxamide from 5-amino-1-(5-phospho-D-ribosyl)imidazole-4-carboxylate: step 1/2. The polypeptide is Phosphoribosylaminoimidazole-succinocarboxamide synthase (Syntrophobacter fumaroxidans (strain DSM 10017 / MPOB)).